Consider the following 1247-residue polypeptide: Structural polyprotein (1247 aa).

A disordered region spans residues 52–103; it reads ALRTVPQKPRRTRKTKKQKQVKQEQQSTRNQKKKAPKQKQTQKKKRPGRRER. Basic residues-rich tracts occupy residues 59 to 71 and 81 to 100; these read KPRR…KQKQ and NQKK…RPGR. Positions 86 to 99 are ribosome-binding; that stretch reads APKQKQTQKKKRPG. The cysteines at positions 112 and 127 are disulfide-linked. Positions 112–260 constitute a Peptidase S3 domain; the sequence is CIFEVKHEGK…KITPEGSVEW (149 aa). H138 serves as the catalytic Charge relay system. Positions 154 to 159 are interaction with spike glycoprotein E2; the sequence is KRSSKY. Catalysis depends on charge relay system residues D160 and S212. Residues 261-273 are functions as an uncleaved signal peptide for the precursor of protein E3/E2; that stretch reads SLALPVMCLLANT. Disulfide bonds link C268/C277, C282/C286, C285/C317, C343/C449, C346/C352, C415/C429, C477/C590, C525/C549, and C527/C544. N-linked (GlcNAc...) asparagine; by host glycosylation occurs at N272. Over 325-691 the chain is Extracellular; that stretch reads NARENFNVYK…YYYELYPTTT (367 aa). Residue N587 is glycosylated (N-linked (GlcNAc...) asparagine; by host). The chain crosses the membrane as a helical span at residues 692–712; sequence IAVLAAASIVVASLVSLSLGM. The Cytoplasmic portion of the chain corresponds to 713-747; it reads CICARRRCITPYELTPGATIPFLLGVLCCVKTAKA. The interaction with the capsid protein stretch occupies residues 715-719; that stretch reads CARRR. 3 S-palmitoyl cysteine; by host lipidation sites follow: C720, C740, and C741. Positions 720–740 are transient transmembrane before p62-6K protein processing; it reads CITPYELTPGATIPFLLGVLC. A disulfide bridge connects residues C720 and C741. Residues 748–762 are Extracellular-facing; the sequence is ASYYEAATYLWNEQQ. A helical membrane pass occupies residues 763 to 783; it reads PLFWLQLLIPLSAAIVACNCL. At 784–787 the chain is on the cytoplasmic side; the sequence is KLLP. Residues 788–808 form a helical membrane-spanning segment; that stretch reads CCCKTLTFLAVMSIGARTVSA. Residues 809–1223 lie on the Extracellular side of the membrane; that stretch reads YEHATVIPNT…AMSWVQKITG (415 aa). 4 disulfides stabilise this stretch: C857–C922, C870–C902, C871–C904, and C876–C886. Residues 892 to 909 form an E1 fusion peptide loop region; sequence VYPFMWGGAYCFCDAENT. N-linked (GlcNAc...) asparagine; by host glycosylation is found at N949 and N1078. 4 disulfides stabilise this stretch: C1067–C1079, C1109–C1184, C1114–C1188, and C1136–C1178. Residues 1224-1244 traverse the membrane as a helical segment; it reads GVGLVVAIAALILIIVLCVSF. C1241 carries S-palmitoyl cysteine; by host lipidation. At 1245 to 1247 the chain is on the cytoplasmic side; it reads SRH.

As to quaternary structure, homodimer. Homomultimer. Interacts with host karyopherin KPNA4; this interaction allows the nuclear import of the viral capsid protein. Interacts with spike glycoprotein E2. Interacts with host IRAK1; the interaction leads to inhibition of IRAK1-dependent signaling. The precursor of protein E3/E2 and E1 form a heterodimer shortly after synthesis. In terms of assembly, the precursor of protein E3/E2 and E1 form a heterodimer shortly after synthesis. Processing of the precursor of protein E3/E2 into E2 and E3 results in a heterodimer of the spike glycoproteins E2 and E1. Spike at virion surface are constituted of three E2-E1 heterodimers. After target cell attachment and endocytosis, E1 change conformation to form homotrimers. Interacts with 6K protein. As to quaternary structure, interacts with spike glycoprotein E1. Processing of the precursor of protein E3/E2 into E2 and E3 results in a heterodimer of the spike glycoproteins E2 and E1. Spike at virion surface are constituted of a trimer of E2-E1 heterodimers. Interacts with 6K protein. Interacts with host MXRA8; this interaction mediates virus entry. Oligomer. Interacts with spike glycoprotein E1. Interacts with spike glycoprotein E2. Structural polyprotein: Specific enzymatic cleavages in vivo yield mature proteins. Capsid protein is auto-cleaved during polyprotein translation, unmasking a signal peptide at the N-terminus of the precursor of E3/E2. The remaining polyprotein is then targeted to the host endoplasmic reticulum, where host signal peptidase cleaves it into pE2, 6K and E1 proteins. pE2 is further processed to mature E3 and E2 by host furin in trans-Golgi vesicle. In terms of processing, palmitoylated via thioester bonds. These palmitoylations may induce disruption of the C-terminus transmembrane. This would result in the reorientation of E2 C-terminus from lumenal to cytoplasmic side. Post-translationally, N-glycosylated. Palmitoylated via thioester bonds.

The protein resides in the virion. The protein localises to the host cytoplasm. Its subcellular location is the host cell membrane. It is found in the virion membrane. It localises to the host Golgi apparatus. The protein resides in the host trans-Golgi network. The protein localises to the host endoplasmic reticulum. The enzyme catalyses Autocatalytic release of the core protein from the N-terminus of the togavirus structural polyprotein by hydrolysis of a -Trp-|-Ser- bond.. Its function is as follows. Possesses a protease activity that results in its autocatalytic cleavage from the nascent structural protein. Following its self-cleavage, the capsid protein transiently associates with ribosomes, and within several minutes the protein binds to viral RNA and rapidly assembles into icosahedric core particles. The resulting nucleocapsid eventually associates with the cytoplasmic domain of the spike glycoprotein E2 at the cell membrane, leading to budding and formation of mature virions. In case of infection, new virions attach to target cells and after clathrin-mediated endocytosis their membrane fuses with the host endosomal membrane. This leads to the release of the nucleocapsid into the cytoplasm, followed by an uncoating event necessary for the genomic RNA to become accessible. The uncoating might be triggered by the interaction of capsid proteins with ribosomes. Binding of ribosomes would release the genomic RNA since the same region is genomic RNA-binding and ribosome-binding. Functionally, provides the signal sequence for the translocation of the precursor of protein E3/E2 to the host endoplasmic reticulum. Mediates pH protection of spike glycoprotein E1 during the transport via the secretory pathway. Plays a role in viral attachment to target host cell, by binding to the cell receptor MXRA8. Synthesized as a p62 precursor which is processed by furin at the cell membrane just before virion budding, giving rise to E2-E1 heterodimer. The p62-E1 heterodimer is stable, whereas E2-E1 is unstable and dissociate at low pH. p62 is processed at the last step, presumably to avoid E1 fusion activation before its final export to cell surface. E2 C-terminus contains a transitory transmembrane that would be disrupted by palmitoylation, resulting in reorientation of the C-terminal tail from lumenal to cytoplasmic side. This step is critical since E2 C-terminus is involved in budding by interacting with capsid proteins. This release of E2 C-terminus in cytoplasm occurs lately in protein export, and precludes premature assembly of particles at the endoplasmic reticulum membrane. In terms of biological role, acts as a viroporin that participates in virus glycoprotein processing and transport to the plasma membrane, cell permeabilization and budding of viral particles. Disrupts the calcium homeostasis of the cell, probably at the endoplasmic reticulum level. This leads to cytoplasmic calcium elevation. Because of its lipophilic properties, the 6K protein is postulated to influence the selection of lipids that interact with the transmembrane domains of the glycoproteins, which, in turn, affects the deformability of the bilayer required for the extreme curvature that occurs as budding proceeds. Present in low amount in virions, about 3% compared to viral glycoproteins. Its function is as follows. Class II viral fusion protein. Fusion activity is inactive as long as E1 is bound to E2 in mature virion. After virus attachment to target cell via host MXRA8 and endocytosis, acidification of the endosome induce dissociation of E1/E2 heterodimer and concomitant trimerization of the E1 subunits. This E1 trimer is fusion active, and promotes release of viral nucleocapsid in cytoplasm after endosome and viral membrane fusion. Efficient fusion requires the presence of cholesterol and sphingolipid in the target membrane. This O'nyong-nyong virus (strain SG650) (ONNV) protein is Structural polyprotein.